The sequence spans 369 residues: Mycofactocin maturase MftC (369 aa).

The region spanning 16 to 232 is the Radical SAM core domain; sequence LDAPICLTWE…KGERVLTGDS (217 aa). Residues cysteine 30, cysteine 34, cysteine 37, cysteine 251, cysteine 258, cysteine 269, cysteine 310, cysteine 313, cysteine 319, cysteine 323, and cysteine 341 each contribute to the [4Fe-4S] cluster site. The disordered stretch occupies residues 347–369; the sequence is APALAQERHAPRPRVDHSRGSRE. The segment covering 352-369 has biased composition (basic and acidic residues); it reads QERHAPRPRVDHSRGSRE.

It belongs to the radical SAM superfamily. MftC family. As to quaternary structure, interacts with MftB. Requires [4Fe-4S] cluster as cofactor.

The enzyme catalyses [mycofactocin precursor peptide]-C-terminal glycyl-L-valyl-L-tyrosine + S-adenosyl-L-methionine = [mycofactocin precursor peptide]-C-terminal glycyl-N-{[2-(4-hydroxyphenyl)ethenyl]-3-methylbutanamide} + 5'-deoxyadenosine + L-methionine + CO2. The catalysed reaction is [mycofactocin precursor peptide]-C-terminal glycyl-N-{[2-(4-hydroxyphenyl)ethenyl]-3-methylbutanamide} + AH2 + S-adenosyl-L-methionine = [mycofactocin precursor peptide]-C-terminal glycyl-N-{5-[(4-hydroxyphenyl)methyl]-4,4-dimethyl-2-oxopyrrolidin-3-yl}acetamide + 5'-deoxyadenosine + L-methionine + A + H(+). Radical S-adenosylmethionine (SAM) enzyme responsible for the first step of the biosynthesis of the enzyme cofactor mycofactocin (MFT). Catalyzes two reactions at the C-terminus of the mycofactocin precursor (the MftA peptide). The first one is the oxidative decarboxylation of the C-terminal L-tyrosine of MftA, forming an unsaturated tyramine moiety. The second reaction is the cross-linking of the tyramine with the penultimate L-valine residue, forming a five-membered lactam ring. Its activity requires the presence of the MftB chaperone. In Mycobacterium ulcerans (strain Agy99), this protein is Mycofactocin maturase MftC.